A 361-amino-acid polypeptide reads, in one-letter code: UDP-N-acetylglucosamine--N-acetylmuramyl-(pentapeptide) pyrophosphoryl-undecaprenol N-acetylglucosamine transferase (361 aa).

Residues 13–15 (TGG), asparagine 125, arginine 167, serine 196, isoleucine 251, 270–275 (ALTVTE), and glutamine 296 each bind UDP-N-acetyl-alpha-D-glucosamine.

Belongs to the glycosyltransferase 28 family. MurG subfamily.

Its subcellular location is the cell inner membrane. The enzyme catalyses di-trans,octa-cis-undecaprenyl diphospho-N-acetyl-alpha-D-muramoyl-L-alanyl-D-glutamyl-meso-2,6-diaminopimeloyl-D-alanyl-D-alanine + UDP-N-acetyl-alpha-D-glucosamine = di-trans,octa-cis-undecaprenyl diphospho-[N-acetyl-alpha-D-glucosaminyl-(1-&gt;4)]-N-acetyl-alpha-D-muramoyl-L-alanyl-D-glutamyl-meso-2,6-diaminopimeloyl-D-alanyl-D-alanine + UDP + H(+). It functions in the pathway cell wall biogenesis; peptidoglycan biosynthesis. Cell wall formation. Catalyzes the transfer of a GlcNAc subunit on undecaprenyl-pyrophosphoryl-MurNAc-pentapeptide (lipid intermediate I) to form undecaprenyl-pyrophosphoryl-MurNAc-(pentapeptide)GlcNAc (lipid intermediate II). The polypeptide is UDP-N-acetylglucosamine--N-acetylmuramyl-(pentapeptide) pyrophosphoryl-undecaprenol N-acetylglucosamine transferase (Psychrobacter cryohalolentis (strain ATCC BAA-1226 / DSM 17306 / VKM B-2378 / K5)).